A 12345-amino-acid chain; its full sequence is Muscle-specific protein 300 kDa (12345 aa).

Disordered regions lie at residues 1-68 and 121-152; these read MADS…STVT and WSDG…DAEN. Residues 1 to 12295 are Cytoplasmic-facing; the sequence is MADSGGPGSK…GARFLGRVAR (12295 aa). Residues 19-28 are compositionally biased toward gly residues; that stretch reads AGGGGAGAAG. The segment covering 45-60 has biased composition (basic and acidic residues); the sequence is EQKSSREQVLEEEKSQ. One copy of the LRR 1 repeat lies at 249–273; the sequence is FKELENFLEGERTVREVPSADGVRT. Disordered regions lie at residues 295–325, 387–488, and 504–526; these read EGYV…RSVD, TVQV…RKLI, and GKSN…GRPA. Positions 299–321 are enriched in low complexity; that stretch reads SPRDSPSWSRSSYSSERSSVTPP. Composition is skewed to polar residues over residues 387 to 404 and 414 to 434; these read TVQV…STPQ and TTKT…QTGP. The segment covering 462–484 has biased composition (low complexity); sequence TITSTTTKSTSSSTSATSSSSTS. Acidic residues predominate over residues 511–520; sequence NDIDIDNDSD. Calponin-homology (CH) domains follow at residues 630–737 and 777–882; these read RVQK…LYFQ and QGAR…HKYP. Residues 823–847 form an LRR 2 repeat; sequence LVNLAELKKTSNRQRLETAFDVAES. Residues 919-952 form a TPR 1 repeat; that stretch reads SSFPRDFGEYLLARSEVDAHLAAYNRLKQLIESQ. 3 LRR repeats span residues 1089-1112, 1389-1411, and 1616-1642; these read CCLI…YGHE, HLFH…IHQW, and LKDV…ILQR. One copy of the TPR 2 repeat lies at 1603–1636; it reads LEFRLDENAFYQSLKDVEKELQLEQQALNRNEDV. An HAT 1 repeat occupies 1903-1935; sequence TGWNQAYTETSDKLQALKGTQAVWSEFVDQKND. LRR repeat units follow at residues 2087 to 2109 and 2558 to 2581; these read KQLD…IAEA and QQQI…FGQA. The region spanning 2109-2233 is the Calponin-homology (CH) 3 domain; sequence AKRLKGEITK…SRWTAVHENA (125 aa). Residues 2663 to 2696 form a TPR 3 repeat; that stretch reads ADRIQKYNLISQALREYADSKDKFSKELKKAEDL. Residues 2699–2724 are disordered; that stretch reads AIPQQPRDETELHQASEKTRKTMEQL. Residues 2704-2724 are compositionally biased toward basic and acidic residues; sequence PRDETELHQASEKTRKTMEQL. 3 LRR repeats span residues 2728–2751, 2935–2959, and 3030–3053; these read KLSL…IGEP, CRAL…VDEL, and SSDK…IDDC. Positions 2894–2962 form a coiled coil; the sequence is EQELRRRSKE…KQKVDELRNL (69 aa). The Spectrin 1 repeat unit spans residues 3110–3207; sequence LWSQYEQSNE…AVSKALTSYI (98 aa). The stretch at 3346 to 3379 is one TPR 4 repeat; sequence KAKVPTTDELYPTLATKKAALQNYKTQLQEITLH. LRR repeat units follow at residues 3370-3393, 3437-3462, 3530-3556, and 3611-3634; these read KTQL…AVTL, LEKA…TFEK, LVKL…WMKN, and NLKL…SIAK. The Spectrin 2 repeat unit spans residues 3539 to 3633; the sequence is KWDEFDTIIE…LKNLCKESIA (95 aa). One copy of the TPR 5 repeat lies at 3629–3662; the sequence is KESIAKYVNYVKDHESFDKDFDSFKQNLQSSVDE. The stretch at 3706–3739 is one HAT 2 repeat; sequence KLYGHTSPEGREIIRQQLRALRTLWDNYTDDLNS. Residues 3748-3771 form an LRR 15 repeat; the sequence is LLQFNEFSIAQDQLTKWLKDVDKA. A Spectrin 3 repeat occupies 4177–4273; it reads SYQDILNQTV…YDQVGQDCAK (97 aa). Residues 4360-4393 form a TPR 6 repeat; the sequence is EVMARDLANLHADFEKFGASLSDVKSGLENRLQQ. The HAT 3 repeat unit spans residues 4371–4403; sequence ADFEKFGASLSDVKSGLENRLQQWNDYEINLDR. The stretch at 4611 to 4701 is one Spectrin 4 repeat; sequence FDEIADSLKS…GKLQKRAQNY (91 aa). 2 LRR repeats span residues 4654-4676 and 4742-4763; these read NDIN…LPEK and EQIS…LADE. The stretch at 4799-4830 is one HAT 4 repeat; sequence EWESLLTTISSTIEAIEARLQHWSEYEQLRDQ. The Spectrin 5 repeat unit spans residues 4820–4919; the sequence is HWSEYEQLRD…VKELNNRWQQ (100 aa). The LRR 18 repeat unit spans residues 4839 to 4863; sequence DNNLHAIDLKEDLPKKRAQLDALKA. The HAT 5 repeat unit spans residues 4894–4926; sequence ASGPELVTKYQQIFHKVKELNNRWQQYVTSHED. LRR repeat units lie at residues 5266–5289 and 5333–5357; these read QIDI…EKQV and SSVY…RDQH. The stretch at 5645-5678 is one TPR 7 repeat; it reads SAEPEDCEIIEQEVALLQEEFDAYREALNKAKDY. LRR repeat units follow at residues 5761–5784, 5820–5843, and 5979–6002; these read SNAI…VMRR, PGTL…FETG, and TKFD…VNSH. Residues 5791 to 5895 form a Spectrin 6 repeat; the sequence is EHQQHHSLYE…DLNDVRQKLA (105 aa). An HAT 6 repeat occupies 6088 to 6120; sequence SEWETLQTISRDARSSLESCLAAWQTFLQKFNK. Spectrin repeat units follow at residues 6321–6405 and 6424–6530; these read RWND…DKLK and AYHQ…RLLE. 2 coiled-coil regions span residues 6356–6397 and 6454–6484; these read MKTL…VNRL and REQT…LNAK. An LRR 24 repeat occupies 6363 to 6387; that stretch reads YKTLSNELKLKGNELEQLQSEARDL. The stretch at 6522 to 6555 is one TPR 8 repeat; that stretch reads VQIKNRLLESLAKFQEYEDTLDSIMRNLETYEPI. LRR repeat units lie at residues 6531–6554 and 6560–6587; these read SLAK…TYEP and LDAP…LNNE. Residues 6567–6597 adopt a coiled-coil conformation; the sequence is LELAQNQLRCAQEMQNKLNNEKSRLAAAVQA. Residues 6631-6657 form a disordered region; it reads EDLLDQKPPPKTRSSTGGVSTDDDKDE. Residues 6660–6695 form a TPR 9 repeat; the sequence is VEIQVELSDVNEALLDPIAHERVKNYRRIVRLNSAH. The stretch at 7004-7026 is one LRR 27 repeat; it reads SALRNLNTENRNLSGVLKAELDR. One copy of the TPR 10 repeat lies at 7161–7195; sequence EMETATEGELRTTSLPVLEEQLAHYKKLLSDAENK. 4 LRR repeats span residues 7219–7242, 7300–7318, 7319–7339, and 7340–7361; these read LKLN…IDDR, KELK…DDLP, ELQS…DQLA, and HLRQ…IIAF. Residues 7419 to 7457 are a coiled coil; the sequence is KNSITEQLQSLKNQLQNLRKAVESQRQKHQLQLESHKKM. Residues 7524–7547 form an LRR 32 repeat; it reads SSLLEMLSEGRSLVASLPHELEER. Residues 7644 to 7676 form an HAT 7 repeat; that stretch reads TKLTNTLANAKTQQSELEKEAERWREYQQSIDR. A TPR 11 repeat occupies 7654-7687; it reads KTQQSELEKEAERWREYQQSIDRVKATIERTKFV. 3 LRR repeats span residues 7692 to 7714, 7752 to 7777, and 7816 to 7840; these read QNLA…VQSQ, QDLV…GFEN, and LREE…ILTF. A TPR 12 repeat occupies 7759–7792; it reads EQRRDNLQQLAEHWDGFENSLHAWEKALGRLEDK. Residues 7799-7935 adopt a coiled-coil conformation; sequence TVRSRRHLED…NSQVQQAAEE (137 aa). A TPR 13 repeat occupies 7878–7911; the sequence is SKDLEEIEQVFRRISQLQDKLNALHEQLQSVHVY. 4 LRR repeats span residues 8178 to 8201, 8238 to 8264, 8298 to 8321, and 8354 to 8377; these read KISV…EWDQ, EKTL…HFRN, EQTL…IIQE, and DELL…SLDG. One copy of the TPR 14 repeat lies at 8431–8464; the sequence is QQGITMIANAMHGQKKRQQEIDEYQQHLLELEQW. Residues 8534 to 8557 form an LRR 40 repeat; sequence EQLQSIITILREQVTVATKRIFTI. Disordered stretches follow at residues 8583-8616, 8966-9023, 9131-9158, 9361-9459, 9502-9735, and 9769-9797; these read IKPP…EEEI, QKPT…LPAP, EFEP…QVVA, GKES…PDSD, LVED…TSIS, and TMQL…EQQL. Positions 8601 to 8611 are enriched in polar residues; it reads SNENTIDSSSM. A compositionally biased stretch (low complexity) spans 8982–9011; the sequence is TQVTTTTRTTTATTQEQEQPEQQTQPTTTE. The span at 9136–9151 shows a compositional bias: basic and acidic residues; that stretch reads SPHEESTKSDLVKPQE. Positions 9394 to 9404 are enriched in basic residues; sequence KRRRKKKKRRD. Positions 9410 to 9419 are enriched in acidic residues; the sequence is ELEQEQETEP. The segment covering 9420–9439 has biased composition (low complexity); sequence EPVAAVKEPEVSSDVPVSPE. A compositionally biased stretch (basic and acidic residues) spans 9440–9451; sequence DSPRDTVRHESI. Polar residues-rich tracts occupy residues 9544–9563, 9587–9597, and 9605–9625; these read AVQT…SQTL, ISTTEIQTDVS, and EISS…TTPK. Low complexity predominate over residues 9658-9680; sequence TSEQSTVTETTTTTETHVQTTTP. The segment covering 9681–9698 has biased composition (basic and acidic residues); that stretch reads EPREQTEVIKPETAHEET. An LRR 41 repeat occupies 9699 to 9721; the sequence is STVELVQFADGEMQTTPPGDQQP. Residues 9711-9735 show a composition bias toward polar residues; the sequence is MQTTPPGDQQPASLDDSSLTATSIS. Residues 9777–9788 are compositionally biased toward basic residues; it reads KKSKKDKKKKQK. LRR repeat units follow at residues 9995–10019, 10073–10096, 10252–10276, and 10353–10376; these read SNVL…ILEV, EEKL…VVQL, KEFT…SLEQ, and RDEL…TSAD. Coiled-coil stretches lie at residues 10072–10099 and 10172–10257; these read SEEK…LERQ and LSAK…FTKI. The TPR 15 repeat unit spans residues 10231–10264; that stretch reads QAERERVLQLQSLAEEYEQTLKEFTKITVLADKL. An HAT 8 repeat occupies 10426-10458; that stretch reads IVLLKLREEVALYLHRLLVFKEIWVQYEQQTDK. LRR repeat units lie at residues 10512 to 10535, 10570 to 10593, and 10644 to 10667; these read EKSL…QLED, EREL…EEEL, and AEEL…ISNQ. Residues 10854–10888 form a TPR 16 repeat; it reads VVAWNDTSENLQQLRTRYQRAVELWDKYRNASAAV. Residues 10855 to 10887 form an HAT 9 repeat; sequence VAWNDTSENLQQLRTRYQRAVELWDKYRNASAA. LRR repeat units lie at residues 10907-10929 and 11021-11043; these read DALQ…ILEL and AHLQ…HQNS. Residues 11016-11046 are a coiled coil; sequence LAALRAHLQTLARTEEQLRQLKERHQNSEVA. One copy of the HAT 10 repeat lies at 11070–11104; sequence DTFQEYHRLSTRLARSQNSSEALRLWRQYLQHVQS. A TPR 17 repeat occupies 11072-11105; it reads FQEYHRLSTRLARSQNSSEALRLWRQYLQHVQSF. One copy of the LRR 51 repeat lies at 11197–11222; the sequence is EAERNALQLRYIHLKRVPHLKHRLDA. Coiled coils occupy residues 11220–11247 and 11281–11308; these read LDAM…LARH and LQRV…AQKL. LRR repeat units follow at residues 11342–11365, 11398–11422, 11670–11692, 11697–11720, and 11744–11766; these read SALE…DMKT, LSNY…VEKD, EELE…LAMS, PENI…LTPR, and EATN…ENQQ. A coiled-coil region spans residues 11655 to 11685; that stretch reads KHKLEERQMELRAKLEELESQSVNLRQLEQI. Residues 11776–11806 adopt a coiled-coil conformation; that stretch reads LQRLESLEKKLQDAQQHVQQADNLAQEAKTR. The stretch at 11804–11836 is one HAT 11 repeat; that stretch reads KTRTKQQPQLKQLLELVSAYTTLWQTVQTRIVT. 2 LRR repeats span residues 11959-11981 and 12198-12220; these read DTVA…RQQH and SRLT…YIVK. The segment at 12253-12272 is disordered; the sequence is SMQAAAPNTENANNTDGGDA. Over residues 12256 to 12267 the composition is skewed to low complexity; sequence AAAPNTENANNT. Residues 12287 to 12345 enclose the KASH domain; sequence ARFLGRVARASLPIQALMLLLLGVATLVPHGEDYTCMFSNTFARSLEPMLSYPHGPPPT. A helical; Anchor for type IV membrane protein transmembrane segment spans residues 12296 to 12316; the sequence is ASLPIQALMLLLLGVATLVPH. The LRR 59 repeat unit spans residues 12301–12323; sequence QALMLLLLGVATLVPHGEDYTCM. Topologically, residues 12317-12345 are perinuclear space; that stretch reads GEDYTCMFSNTFARSLEPMLSYPHGPPPT.

This sequence belongs to the nesprin family. In terms of assembly, core component of LINC complexes which are composed of inner nuclear membrane SUN domain-containing proteins coupled to outer nuclear membrane KASH domain-containing nesprins. Interacts with klar; this interaction allows the anchoring of the Msp300 nuclear ring structure to the nuclear envelope. Interacts with sls; this interaction mediates the recruitment of Msp300 to the Z-disks.

It localises to the nucleus membrane. Its subcellular location is the cytoplasm. It is found in the myofibril. The protein localises to the sarcomere. The protein resides in the z line. It localises to the cytoskeleton. Its subcellular location is the microtubule organizing center. It is found in the perinuclear region. Functionally, component of the LINC (LInker of Nucleoskeleton and Cytoskeleton) complex involved in the connection between the nuclear lamina and the cytoskeleton. Collaborates with Klar to promote even spacing of the myonuclei at the periphery of striated muscle fibers by mediating a tight association between a nuclear ring structure of Msp300 and the plus ends of a unique astral MT network. In addition, is essential for anchoring nuclei, mitochondria and endoplasmic reticulum (ER) structures to the Z-disks. In fat body cells, part of perinuclear non-centrosomal microtubule-organizing centers (ncMTOCs) which function to accommodate the organization of microtubule (MT) networks to control nuclear positioning and dynein motor-based retrograde endosomal trafficking. Functions as the primary organizer of the ncMTOC by recruiting Patronin, shot and msps to the organizing centre. Within the ncMTOC, Msp300 and shot anchors the ncMTOC at the nuclear surface and recruits the MT minus-end regulators Patronin and Nin for assembly, anchoring and/or stabilization of circumferential and radial MTs at the ncMTOCs. Patronin, and perhaps Nin, recruits msps to the ncMTOC for the gamma-tubulin-independent elongation of radial MTs. The chain is Muscle-specific protein 300 kDa from Drosophila melanogaster (Fruit fly).